Consider the following 307-residue polypeptide: Elongation factor Ts (307 aa).

The involved in Mg(2+) ion dislocation from EF-Tu stretch occupies residues 80–83 (TDFV).

It belongs to the EF-Ts family.

It is found in the cytoplasm. Functionally, associates with the EF-Tu.GDP complex and induces the exchange of GDP to GTP. It remains bound to the aminoacyl-tRNA.EF-Tu.GTP complex up to the GTP hydrolysis stage on the ribosome. This Clostridium botulinum (strain Loch Maree / Type A3) protein is Elongation factor Ts.